A 101-amino-acid polypeptide reads, in one-letter code: Large ribosomal subunit protein uL24 (101 aa).

This sequence belongs to the universal ribosomal protein uL24 family. In terms of assembly, part of the 50S ribosomal subunit.

One of two assembly initiator proteins, it binds directly to the 5'-end of the 23S rRNA, where it nucleates assembly of the 50S subunit. In terms of biological role, one of the proteins that surrounds the polypeptide exit tunnel on the outside of the subunit. This Streptococcus thermophilus (strain ATCC BAA-491 / LMD-9) protein is Large ribosomal subunit protein uL24.